We begin with the raw amino-acid sequence, 694 residues long: MNFQTISINLTEGKILVFETGKIARQANGAVLVRSGETCVFASACAVDLDDKVDFLPLRVDYQEKFSSTGKTLGGFIKREGRPSEKEILVSRLIDRSLRPSFPYRLMQDVQVLSYVWSYDGQVLPDPLAICAASAALAISDIPQSNIVAGVRIGCIDNQWVINPTKTELASSTLDLVLAGTENAILMIEGHCDFFTEEQVLDAIEFGHKHIVTICKRLQLWQEEVGKSKNLSAVYPLPAEVLTAVKECAQDKFTELFNIKDKKVHAATAHEIEENILEKLQREDDDLFSSFNIKAACKTLKSDTMRALIRDREIRADGRSLTTVRPITIETSYLPRTHGSCLFTRGETQTLAVCTLGSEAMAQRYEDLNGEGLSKFYLQYFFPPFSVGEVGRIGSPGRREIGHGKLAEKALSHALPDSATFPYTIRIESNITESNGSSSMASVCGGCLALMDAGVPISSPIAGIAMGLILDDQGAIILSDISGLEDHLGDMDFKIAGSGKGITAFQMDIKVEGITPAIMKKALSQAKQGCNDILNIMNEALSAPKADLSQYAPRIETMQIKPTKIASVIGPGGKQIRQIIEETGVQIDVNDLGVVSISASSASAINKAKEIIEGLVGEVEVGKTYRGRVTSVVAFGAFVEVLPGKEGLCHISECSRQRIENISDVVKEGDIIDVKLLSINEKGQLKLSHKATLE.

Mg(2+) is bound by residues D486 and D492. The KH domain occupies 553-612 (PRIETMQIKPTKIASVIGPGGKQIRQIIEETGVQIDVNDLGVVSISASSASAINKAKEII). In terms of domain architecture, S1 motif spans 622–690 (GKTYRGRVTS…EKGQLKLSHK (69 aa)).

It belongs to the polyribonucleotide nucleotidyltransferase family. The cofactor is Mg(2+).

The protein localises to the cytoplasm. It catalyses the reaction RNA(n+1) + phosphate = RNA(n) + a ribonucleoside 5'-diphosphate. Its function is as follows. Involved in mRNA degradation. Catalyzes the phosphorolysis of single-stranded polyribonucleotides processively in the 3'- to 5'-direction. The chain is Polyribonucleotide nucleotidyltransferase from Chlamydia pneumoniae (Chlamydophila pneumoniae).